The following is a 627-amino-acid chain: Chaperone protein DnaK (627 aa).

Phosphothreonine; by autocatalysis is present on Thr197. Over residues 598-611 (AYAKEQGGQQGAAD) the composition is skewed to low complexity. A disordered region spans residues 598-627 (AYAKEQGGQQGAADAGKKADDDDVIDAEVE). Residues 618–627 (DDDVIDAEVE) are compositionally biased toward acidic residues.

It belongs to the heat shock protein 70 family.

Its function is as follows. Acts as a chaperone. In Sulfurovum sp. (strain NBC37-1), this protein is Chaperone protein DnaK.